The primary structure comprises 140 residues: ATP synthase epsilon chain (140 aa).

The protein belongs to the ATPase epsilon chain family. F-type ATPases have 2 components, CF(1) - the catalytic core - and CF(0) - the membrane proton channel. CF(1) has five subunits: alpha(3), beta(3), gamma(1), delta(1), epsilon(1). CF(0) has three main subunits: a, b and c.

Its subcellular location is the cell inner membrane. Functionally, produces ATP from ADP in the presence of a proton gradient across the membrane. The sequence is that of ATP synthase epsilon chain from Sodalis glossinidius (strain morsitans).